The sequence spans 165 residues: Protein SprT (165 aa).

Positions glutamate 10–valine 157 constitute a SprT-like domain. Residue histidine 69 participates in Zn(2+) binding. The active site involves glutamate 70. Residue histidine 73 coordinates Zn(2+).

Belongs to the SprT family. The cofactor is Zn(2+).

The protein localises to the cytoplasm. This is Protein SprT from Pseudomonas paraeruginosa (strain DSM 24068 / PA7) (Pseudomonas aeruginosa (strain PA7)).